We begin with the raw amino-acid sequence, 375 residues long: Nucleolysin TIAR (375 aa).

2 consecutive RRM domains span residues 9-85 (RTLY…WATT) and 97-175 (FHVF…WATR). Residue Lys122 is modified to N6-acetyllysine. Ser201 carries the phosphoserine modification. The RRM 3 domain occupies 205-277 (CTVYCGGIAS…HVVKCYWGKE (73 aa)). A disordered region spans residues 345–375 (FGAQPPQGQAPPPVIPPPNQAGYGMASYQTQ). The span at 352–363 (GQAPPPVIPPPN) shows a compositional bias: pro residues.

In terms of assembly, interacts with FASTK. In terms of processing, phosphorylated by MAPK14 following DNA damage, releasing TIAR from GADD45A mRNA. Expressed in brain, heart, kidney, lung and skeletal muscle.

It localises to the nucleus. It is found in the cytoplasm. The protein resides in the cytolytic granule. Its subcellular location is the stress granule. RNA-binding protein involved in alternative pre-RNA splicing and in cytoplasmic stress granules formation. Shows a preference for uridine-rich RNAs. Activates splicing of alternative exons with weak 5' splice sites followed by a U-rich stretch on its own pre-mRNA and on TIA1 mRNA. Promotes the inclusion of TIA1 exon 5 to give rise to the long isoform (isoform a) of TIA1. Acts downstream of the stress-induced phosphorylation of EIF2S1/EIF2A to promote the recruitment of untranslated mRNAs to cytoplasmic stress granules (SG). Possesses nucleolytic activity against cytotoxic lymphocyte target cells. May be involved in apoptosis. This Homo sapiens (Human) protein is Nucleolysin TIAR (TIAL1).